Reading from the N-terminus, the 239-residue chain is Glandular kallikrein, prostatic (239 aa).

One can recognise a Peptidase S1 domain in the interval 1–236 (VIGGQECARD…YREWIERTMA (236 aa)). Intrachain disulfides connect C7–C151, C26–C42, C128–C197, C162–C176, and C187–C212. H41 (charge relay system) is an active-site residue. N-linked (GlcNAc...) asparagine glycosylation occurs at N78. D96 acts as the Charge relay system in catalysis. N169 carries an N-linked (GlcNAc...) asparagine glycan. The active-site Charge relay system is S191.

The protein belongs to the peptidase S1 family. Kallikrein subfamily.

It carries out the reaction Preferential cleavage of Arg-|-Xaa bonds in small molecule substrates. Highly selective action to release kallidin (lysyl-bradykinin) from kininogen involves hydrolysis of Met-|-Xaa or Leu-|-Xaa.. Functionally, glandular kallikreins cleave Met-Lys and Arg-Ser bonds in kininogen to release Lys-bradykinin. The chain is Glandular kallikrein, prostatic from Cavia porcellus (Guinea pig).